We begin with the raw amino-acid sequence, 549 residues long: Arginine--tRNA ligase (549 aa).

A 'HIGH' region motif is present at residues 113-123; the sequence is ANPDGPLHIGH.

This sequence belongs to the class-I aminoacyl-tRNA synthetase family.

It is found in the cytoplasm. The enzyme catalyses tRNA(Arg) + L-arginine + ATP = L-arginyl-tRNA(Arg) + AMP + diphosphate. This Archaeoglobus fulgidus (strain ATCC 49558 / DSM 4304 / JCM 9628 / NBRC 100126 / VC-16) protein is Arginine--tRNA ligase (argS).